The sequence spans 556 residues: Arginine--tRNA ligase (556 aa).

The 'HIGH' region motif lies at 132–142; it reads ANPTGDLHLGH.

It belongs to the class-I aminoacyl-tRNA synthetase family. Monomer.

The protein resides in the cytoplasm. It carries out the reaction tRNA(Arg) + L-arginine + ATP = L-arginyl-tRNA(Arg) + AMP + diphosphate. The polypeptide is Arginine--tRNA ligase (Bacillus cereus (strain ATCC 10987 / NRS 248)).